A 292-amino-acid chain; its full sequence is 4-hydroxy-tetrahydrodipicolinate synthase (292 aa).

Threonine 48 is a binding site for pyruvate. The active-site Proton donor/acceptor is the tyrosine 136. The active-site Schiff-base intermediate with substrate is the lysine 164. Residue isoleucine 204 coordinates pyruvate.

The protein belongs to the DapA family. As to quaternary structure, homotetramer; dimer of dimers.

The protein resides in the cytoplasm. The enzyme catalyses L-aspartate 4-semialdehyde + pyruvate = (2S,4S)-4-hydroxy-2,3,4,5-tetrahydrodipicolinate + H2O + H(+). It participates in amino-acid biosynthesis; L-lysine biosynthesis via DAP pathway; (S)-tetrahydrodipicolinate from L-aspartate: step 3/4. Catalyzes the condensation of (S)-aspartate-beta-semialdehyde [(S)-ASA] and pyruvate to 4-hydroxy-tetrahydrodipicolinate (HTPA). This chain is 4-hydroxy-tetrahydrodipicolinate synthase, found in Acetivibrio thermocellus (strain ATCC 27405 / DSM 1237 / JCM 9322 / NBRC 103400 / NCIMB 10682 / NRRL B-4536 / VPI 7372) (Clostridium thermocellum).